Here is a 186-residue protein sequence, read N- to C-terminus: Protein GrpE (186 aa).

Over residues 1 to 13 (MSENTQPEQNQPL) the composition is skewed to polar residues. Residues 1-22 (MSENTQPEQNQPLTGAPSPEEL) are disordered.

It belongs to the GrpE family. Homodimer.

Its subcellular location is the cytoplasm. Functionally, participates actively in the response to hyperosmotic and heat shock by preventing the aggregation of stress-denatured proteins, in association with DnaK and GrpE. It is the nucleotide exchange factor for DnaK and may function as a thermosensor. Unfolded proteins bind initially to DnaJ; upon interaction with the DnaJ-bound protein, DnaK hydrolyzes its bound ATP, resulting in the formation of a stable complex. GrpE releases ADP from DnaK; ATP binding to DnaK triggers the release of the substrate protein, thus completing the reaction cycle. Several rounds of ATP-dependent interactions between DnaJ, DnaK and GrpE are required for fully efficient folding. This chain is Protein GrpE, found in Polaromonas sp. (strain JS666 / ATCC BAA-500).